We begin with the raw amino-acid sequence, 932 residues long: Protein hir1 (932 aa).

WD repeat units lie at residues 16 to 55 (GHRL…RENE), 72 to 111 (THTG…PGLG), 132 to 171 (GHDN…RLKR), 174 to 213 (AHQS…IEKT), 222 to 265 (PLST…SEIN), 268 to 316 (GHEG…PLLS), and 320 to 361 (VFQK…DMVS). Composition is skewed to polar residues over residues 405–426 (STTD…QKTP) and 441–453 (TVDT…SKEQ). Disordered regions lie at residues 405-470 (STTD…NEIP) and 498-520 (TPST…LPPQ). Residues 498–507 (TPSTSRLAST) show a composition bias toward low complexity.

The protein belongs to the WD repeat HIR1 family. As to quaternary structure, interacts with his3 and slm9.

It is found in the cytoplasm. The protein resides in the nucleus. Probably required for replication-independent chromatin assembly. Required for transcriptional silencing in the outer repeat (otr) centromeric repeats and the Tf2 long terminal repeat retrotransposons. Repressor of histone gene transcription in G1 arrested cells. Required for repression of htb1 gene expression outside of S phase. The protein is Protein hir1 (hip1) of Schizosaccharomyces pombe (strain 972 / ATCC 24843) (Fission yeast).